Here is a 509-residue protein sequence, read N- to C-terminus: Histidine ammonia-lyase (509 aa).

The 5-imidazolinone (Ala-Gly) cross-link spans 144–146; sequence ASG. Serine 145 carries the 2,3-didehydroalanine (Ser) modification.

It belongs to the PAL/histidase family. In terms of processing, contains an active site 4-methylidene-imidazol-5-one (MIO), which is formed autocatalytically by cyclization and dehydration of residues Ala-Ser-Gly.

The protein localises to the cytoplasm. The catalysed reaction is L-histidine = trans-urocanate + NH4(+). The protein operates within amino-acid degradation; L-histidine degradation into L-glutamate; N-formimidoyl-L-glutamate from L-histidine: step 1/3. The polypeptide is Histidine ammonia-lyase (Rhodospirillum centenum (strain ATCC 51521 / SW)).